We begin with the raw amino-acid sequence, 269 residues long: Cytochrome c oxidase subunit 3 (269 aa).

The next 7 helical transmembrane spans lie at 24 to 44, 46 to 66, 90 to 110, 138 to 160, 167 to 187, 207 to 227, and 247 to 267; these read LFTS…MHGF, GFQY…GLWF, GVGL…WAFF, PLLN…HSLI, ALYG…FQGV, FGTG…AVGL, and ILYW…VYYW.

It belongs to the cytochrome c oxidase subunit 3 family. As to quaternary structure, component of the cytochrome c oxidase (complex IV, CIV), a multisubunit enzyme composed of a catalytic core of 3 subunits and several supernumerary subunits. The complex exists as a monomer or a dimer and forms supercomplexes (SCs) in the inner mitochondrial membrane with ubiquinol-cytochrome c oxidoreductase (cytochrome b-c1 complex, complex III, CIII).

The protein localises to the mitochondrion inner membrane. It carries out the reaction 4 Fe(II)-[cytochrome c] + O2 + 8 H(+)(in) = 4 Fe(III)-[cytochrome c] + 2 H2O + 4 H(+)(out). Its function is as follows. Component of the cytochrome c oxidase, the last enzyme in the mitochondrial electron transport chain which drives oxidative phosphorylation. The respiratory chain contains 3 multisubunit complexes succinate dehydrogenase (complex II, CII), ubiquinol-cytochrome c oxidoreductase (cytochrome b-c1 complex, complex III, CIII) and cytochrome c oxidase (complex IV, CIV), that cooperate to transfer electrons derived from NADH and succinate to molecular oxygen, creating an electrochemical gradient over the inner membrane that drives transmembrane transport and the ATP synthase. Cytochrome c oxidase is the component of the respiratory chain that catalyzes the reduction of oxygen to water. Electrons originating from reduced cytochrome c in the intermembrane space (IMS) are transferred via the dinuclear copper A center (CU(A)) of subunit 2 and heme A of subunit 1 to the active site in subunit 1, a binuclear center (BNC) formed by heme A3 and copper B (CU(B)). The BNC reduces molecular oxygen to 2 water molecules using 4 electrons from cytochrome c in the IMS and 4 protons from the mitochondrial matrix. The protein is Cytochrome c oxidase subunit 3 (cox3) of Emericella nidulans (Aspergillus nidulans).